A 158-amino-acid chain; its full sequence is Ribosome-binding factor A (158 aa).

Residues 114–158 (AKDAEVRQVSTGAQYAGDADPYRKPEDEDEETDGSSEKNEGPASA) form a disordered region. Positions 148–158 (SSEKNEGPASA) are enriched in basic and acidic residues.

Belongs to the RbfA family. Monomer. Binds 30S ribosomal subunits, but not 50S ribosomal subunits or 70S ribosomes.

Its subcellular location is the cytoplasm. In terms of biological role, one of several proteins that assist in the late maturation steps of the functional core of the 30S ribosomal subunit. Associates with free 30S ribosomal subunits (but not with 30S subunits that are part of 70S ribosomes or polysomes). Required for efficient processing of 16S rRNA. May interact with the 5'-terminal helix region of 16S rRNA. This is Ribosome-binding factor A from Streptomyces griseus subsp. griseus (strain JCM 4626 / CBS 651.72 / NBRC 13350 / KCC S-0626 / ISP 5235).